Consider the following 168-residue polypeptide: ATP synthase subunit d, mitochondrial (168 aa).

This sequence belongs to the ATPase d subunit family. F-type ATPases have 2 components, CF(1) - the catalytic core - and CF(0) - the membrane proton channel. CF(0) seems to have nine subunits: a, b, c, d, e, f, g, F6 and 8 (or A6L).

It is found in the mitochondrion. It localises to the mitochondrion inner membrane. In terms of biological role, mitochondrial membrane ATP synthase (F(1)F(0) ATP synthase or Complex V) produces ATP from ADP in the presence of a proton gradient across the membrane which is generated by electron transport complexes of the respiratory chain. F-type ATPases consist of two structural domains, F(1) - containing the extramembraneous catalytic core, and F(0) - containing the membrane proton channel, linked together by a central stalk and a peripheral stalk. During catalysis, ATP synthesis in the catalytic domain of F(1) is coupled via a rotary mechanism of the central stalk subunits to proton translocation. Part of the complex F(0) domain and the peripheric stalk, which acts as a stator to hold the catalytic alpha(3)beta(3) subcomplex and subunit a/ATP6 static relative to the rotary elements. This Arabidopsis thaliana (Mouse-ear cress) protein is ATP synthase subunit d, mitochondrial.